A 250-amino-acid chain; its full sequence is Anti-sigma-L factor RslA (250 aa).

Topologically, residues 1 to 115 (MTMPLRGLGP…VHRRRRRTRL (115 aa)) are cytoplasmic. A helical transmembrane segment spans residues 116–136 (ITWVASSAAAAVLAIGVLVGV). The Extracellular segment spans residues 137-250 (QGHSAAPQRA…TGQVLLQRSL (114 aa)).

In terms of assembly, interacts with ECF RNA polymerase sigma factor SigL; this should inhibit the interaction of SigL with the RNA polymerase catalytic core. In terms of processing, probably cleaved within the membrane by Rip1 near the cytoplasmic membrane interface.

It localises to the cell membrane. In terms of biological role, an anti-sigma factor for extracytoplasmic function (ECF) sigma factor SigL. ECF sigma factors are held in an inactive form by an anti-sigma factor until released by regulated intramembrane proteolysis (RIP). RIP occurs when an extracytoplasmic signal triggers a concerted proteolytic cascade to transmit information and elicit cellular responses. The membrane-spanning regulatory substrate protein is first cut extracytoplasmically (site-1 protease, S1P), then within the membrane itself (site-2 protease, S2P, Rip1), while cytoplasmic proteases finish degrading the regulatory protein, liberating the sigma factor. This Mycobacterium tuberculosis (strain ATCC 35801 / TMC 107 / Erdman) protein is Anti-sigma-L factor RslA (rslA).